A 104-amino-acid polypeptide reads, in one-letter code: ATP-dependent Clp protease adapter protein ClpS (104 aa).

This sequence belongs to the ClpS family. As to quaternary structure, binds to the N-terminal domain of the chaperone ClpA.

Its function is as follows. Involved in the modulation of the specificity of the ClpAP-mediated ATP-dependent protein degradation. The protein is ATP-dependent Clp protease adapter protein ClpS of Paraburkholderia phymatum (strain DSM 17167 / CIP 108236 / LMG 21445 / STM815) (Burkholderia phymatum).